Reading from the N-terminus, the 527-residue chain is Organic cation/carnitine transporter 2 (527 aa).

At 1–27 (MAEPTQPLLTDSNSSSPRSLDDTIESY) the chain is on the cytoplasmic side. The chain crosses the membrane as a helical span at residues 28–48 (IGSFGWAQFLQAALVSFSGVF). Residues 49-119 (DAQQTFISVF…SFVKGLPESS (71 aa)) lie on the Extracellular side of the membrane. A helical transmembrane segment spans residues 120-140 (FFVGCLIGGLVLSTLADSSLG). Residues 141-149 (RKNMLFLSC) are Cytoplasmic-facing. The helical transmembrane segment at 150 to 170 (LVMAISTMLTVFSPNIWVYAV) threads the bilayer. Topologically, residues 171 to 176 (LRFVNG) are extracellular. Residues 177 to 195 (FGRATIGTCALVLSTELVG) form a helical membrane-spanning segment. 190 to 197 (STELVGKK) is an ATP binding site. Residues 196 to 201 (KKWRGR) are Cytoplasmic-facing. Residues 202-222 (VGIMSFFGFMLGFLSLPLMAY) form a helical membrane-spanning segment. Over 223 to 230 (MNRGSSWR) the chain is Extracellular. Residues 231-251 (ILYAWTSIPTIIYCVLVRFFV) form a helical membrane-spanning segment. Over 252 to 326 (CESPRWLFVR…LVEKRWALKR (75 aa)) the chain is Cytoplasmic. Residues 327–347 (LSAVMAIAFGIGLVYYGMPLA) traverse the membrane as a helical segment. Over 348 to 356 (LSNLDFNIY) the chain is Extracellular. Residues 357 to 377 (LSAAFNALMDLPANLITLFLV) form a helical membrane-spanning segment. At 378 to 385 (DKLSRRNA) the chain is on the cytoplasmic side. The helical transmembrane segment at 386–406 (LIGFTALGGVSSVLIFALHNM) threads the bilayer. Topologically, residues 407-415 (RIGNHGALQ) are extracellular. Residues 416–436 (LALELISYFSACSAFNMEMIY) traverse the membrane as a helical segment. Residues 437-448 (TIELFPTCVRNS) lie on the Cytoplasmic side of the membrane. Residues 449-469 (AIAMARQALVLGGVFSPIMVA) form a helical membrane-spanning segment. The Extracellular portion of the chain corresponds to 470-475 (AGRKNA). The helical transmembrane segment at 476–496 (FWSFGLFGLAIGLLGLFAVGL) threads the bilayer. Residues 497-527 (PETRGSDLCDTMDEEECKDRRSKVAVNNVIA) lie on the Cytoplasmic side of the membrane.

Belongs to the major facilitator (TC 2.A.1) superfamily. Organic cation transporter (TC 2.A.1.19) family. In terms of tissue distribution, weakly expressed in roots, including tips and initiation site of lateral roots, siliques and flowers, especially in pollen and stigma.

The protein localises to the vacuole membrane. High affinity carnitine transporter involved in the active cellular uptake of carnitine. Also transports organic cations. This chain is Organic cation/carnitine transporter 2 (OCT2), found in Arabidopsis thaliana (Mouse-ear cress).